Reading from the N-terminus, the 268-residue chain is LOB domain-containing protein 22 (268 aa).

The tract at residues methionine 1–asparagine 31 is disordered. The span at serine 22–asparagine 31 shows a compositional bias: low complexity. The region spanning glutamine 35–leucine 136 is the LOB domain.

This sequence belongs to the LOB domain-containing protein family.

This Arabidopsis thaliana (Mouse-ear cress) protein is LOB domain-containing protein 22 (LBD22).